The primary structure comprises 786 residues: Endonuclease MutS2 (786 aa).

335-342 (GPNTGGKT) provides a ligand contact to ATP. The tract at residues 529–549 (SQKNAERERKEAEEHRKQSEK) is disordered. The region spanning 711 to 786 (LDLRGERYED…GLGVTVVELK (76 aa)) is the Smr domain.

It belongs to the DNA mismatch repair MutS family. MutS2 subfamily. As to quaternary structure, homodimer. Binds to stalled ribosomes, contacting rRNA.

In terms of biological role, endonuclease that is involved in the suppression of homologous recombination and thus may have a key role in the control of bacterial genetic diversity. Acts as a ribosome collision sensor, splitting the ribosome into its 2 subunits. Detects stalled/collided 70S ribosomes which it binds and splits by an ATP-hydrolysis driven conformational change. Acts upstream of the ribosome quality control system (RQC), a ribosome-associated complex that mediates the extraction of incompletely synthesized nascent chains from stalled ribosomes and their subsequent degradation. Probably generates substrates for RQC. In Bacillus mycoides (strain KBAB4) (Bacillus weihenstephanensis), this protein is Endonuclease MutS2.